Consider the following 330-residue polypeptide: uncharacterized protein (330 aa).

10 helical membrane passes run 15 to 35, 41 to 61, 72 to 92, 102 to 122, 125 to 145, 175 to 195, 201 to 221, 238 to 258, 264 to 284, and 286 to 306; these read LTLIAPFFLWGTAMVAMKGVL, FFVATVRLIPAGILVLLWAMG, GWGWIILFALVDGTLFQGFLA, LGSVIIDSQPIAVALLSSWLF, VIGGIGWLGLLLGVGGISLIG, LWMLLASLSMAVGTVLIPFVS, VVATGWHMIIGGLPLLAIALV, LAYATVFGSAIAYGIFFYLAS, SLSSLTFLTPIFALSFSNLIL, and EQLSSLQWLGVAFTLVSIYLI. 2 consecutive EamA domains span residues 22-146 and 182-308; these read FLWG…LIGL and LSMA…LINQ.

The protein belongs to the EamA transporter family.

Its subcellular location is the cell membrane. This is an uncharacterized protein from Synechocystis sp. (strain ATCC 27184 / PCC 6803 / Kazusa).